The primary structure comprises 495 residues: Serine/threonine protein phosphatase 2A 57 kDa regulatory subunit B' alpha isoform (495 aa).

The segment covering 1–13 has biased composition (basic residues); sequence MFKKIMKGANRKA. 2 disordered regions span residues 1–61 and 462–495; these read MFKK…AATT and QAKSKQVEEQRQNRWRRLDEAVEEREREDPMITS. Over residues 49-61 the composition is skewed to polar residues; sequence VPSSPNSMAAATT.

This sequence belongs to the phosphatase 2A regulatory subunit B56 family. PP2A consists of a common heteromeric enzyme, composed of a catalytic subunit (subunits C), a constant regulatory subunit (subunit A), and a variety of regulatory subunits such as subunits B (the R2/B/PR55/B55, R3/B''/PR72/PR130/PR59 and R5/B'/B56 families). Interacts with BZR1. Interacts with BRI1. Interacts with SRK2E/OST1. As to expression, expressed ubiquitously, higher levels in leaves.

It localises to the nucleus. It is found in the cytoplasm. In terms of biological role, the B regulatory subunit may modulate substrate selectivity and catalytic activity, and may also direct the localization of the catalytic enzyme to a particular subcellular compartment. Required for the formation of the PP2A holoenzyme that positively regulates brassinosteroid signaling by dephosphorylating and activating BZR1. In Arabidopsis thaliana (Mouse-ear cress), this protein is Serine/threonine protein phosphatase 2A 57 kDa regulatory subunit B' alpha isoform (B'ALPHA).